The primary structure comprises 120 residues: uncharacterized protein (120 aa).

The region spanning 29–120 is the Nudix hydrolase domain; that stretch reads QRQAAVLVPI…QVTPVVGIIP (92 aa). A Nudix box motif is present at residues 67 to 89; it reads GAVDNSDATLIAAALREAQEEVA. The Mg(2+) site is built by Glu-83 and Glu-87.

Belongs to the Nudix hydrolase family. PCD1 subfamily. Mn(2+) serves as cofactor. Mg(2+) is required as a cofactor.

In terms of biological role, probably mediates the hydrolysis of some nucleoside diphosphate derivatives. This is an uncharacterized protein from Klebsiella aerogenes (Enterobacter aerogenes).